A 251-amino-acid chain; its full sequence is Aspartate/glutamate leucyltransferase (251 aa).

Belongs to the R-transferase family. Bpt subfamily.

The protein resides in the cytoplasm. It carries out the reaction N-terminal L-glutamyl-[protein] + L-leucyl-tRNA(Leu) = N-terminal L-leucyl-L-glutamyl-[protein] + tRNA(Leu) + H(+). The catalysed reaction is N-terminal L-aspartyl-[protein] + L-leucyl-tRNA(Leu) = N-terminal L-leucyl-L-aspartyl-[protein] + tRNA(Leu) + H(+). Functionally, functions in the N-end rule pathway of protein degradation where it conjugates Leu from its aminoacyl-tRNA to the N-termini of proteins containing an N-terminal aspartate or glutamate. The chain is Aspartate/glutamate leucyltransferase from Xanthomonas oryzae pv. oryzae (strain KACC10331 / KXO85).